The primary structure comprises 82 residues: Conotoxin MiK42 (82 aa).

A signal peptide spans 1-22 (MKLTCALIVAMLLLTACQLITT). A propeptide spanning residues 23–49 (DDFRGRQQYRTARSRTKMQNYKIFRLT) is cleaved from the precursor. 3 cysteine pairs are disulfide-bonded: cysteine 52-cysteine 67, cysteine 59-cysteine 70, and cysteine 66-cysteine 80.

Belongs to the conotoxin O1 superfamily. Expressed by the venom duct.

It localises to the secreted. The sequence is that of Conotoxin MiK42 from Conus miles (Soldier cone).